Consider the following 556-residue polypeptide: Potassium-transporting ATPase potassium-binding subunit (556 aa).

Transmembrane regions (helical) follow at residues 6-26 (AGLI…VPLG), 65-85 (GVLA…LVQG), 133-153 (GLAV…VALV), 176-196 (LRIL…GGAI), 249-269 (PTAW…FSLP), 283-303 (YAIA…MLWF), 378-398 (GLYG…LMVG), 419-439 (YFLV…ALPG), 483-503 (ALGL…LALA), and 526-546 (FVGM…LPML).

It belongs to the KdpA family. As to quaternary structure, the system is composed of three essential subunits: KdpA, KdpB and KdpC.

It localises to the cell membrane. In terms of biological role, part of the high-affinity ATP-driven potassium transport (or Kdp) system, which catalyzes the hydrolysis of ATP coupled with the electrogenic transport of potassium into the cytoplasm. This subunit binds the extracellular potassium ions and delivers the ions to the membrane domain of KdpB through an intramembrane tunnel. This Mycobacterium avium (strain 104) protein is Potassium-transporting ATPase potassium-binding subunit.